Consider the following 273-residue polypeptide: Undecaprenyl-diphosphatase (273 aa).

The next 7 helical transmembrane spans lie at 6–26, 45–65, 90–110, 116–136, 190–210, 222–242, and 252–272; these read SLLVAAILGVVEGLTEFLPVS, AKTFEVVIQLGSILAVVVMFW, LTLIHILLGMIPAVVLGLLFH, LFNPINVMYALVVGGLLLIAA, YAASEFSFLLAVPMMMGATAL, GDIPMFAVGFITAFVVALVAI, and ISFIPFAIYRFIVAAAVYVVF.

Belongs to the UppP family.

The protein resides in the cell inner membrane. It catalyses the reaction di-trans,octa-cis-undecaprenyl diphosphate + H2O = di-trans,octa-cis-undecaprenyl phosphate + phosphate + H(+). In terms of biological role, catalyzes the dephosphorylation of undecaprenyl diphosphate (UPP). Confers resistance to bacitracin. This is Undecaprenyl-diphosphatase from Escherichia fergusonii (strain ATCC 35469 / DSM 13698 / CCUG 18766 / IAM 14443 / JCM 21226 / LMG 7866 / NBRC 102419 / NCTC 12128 / CDC 0568-73).